A 248-amino-acid polypeptide reads, in one-letter code: Aspartate/glutamate leucyltransferase (248 aa).

The protein belongs to the R-transferase family. Bpt subfamily.

The protein resides in the cytoplasm. It catalyses the reaction N-terminal L-glutamyl-[protein] + L-leucyl-tRNA(Leu) = N-terminal L-leucyl-L-glutamyl-[protein] + tRNA(Leu) + H(+). It carries out the reaction N-terminal L-aspartyl-[protein] + L-leucyl-tRNA(Leu) = N-terminal L-leucyl-L-aspartyl-[protein] + tRNA(Leu) + H(+). In terms of biological role, functions in the N-end rule pathway of protein degradation where it conjugates Leu from its aminoacyl-tRNA to the N-termini of proteins containing an N-terminal aspartate or glutamate. This Methylorubrum populi (strain ATCC BAA-705 / NCIMB 13946 / BJ001) (Methylobacterium populi) protein is Aspartate/glutamate leucyltransferase.